A 211-amino-acid polypeptide reads, in one-letter code: MAIPMSMAMATPTDSVSRVWSMSSLKSALPSTASLRLPSSSSRRPVTLRLPISSPSLPSFSGLSPVNPLLSIGLPDWQSFENGFKIVDGGGRIYAMRHGRRVPKLNRPPDQRKALLRGLTTQLLKHGRIKTTRARASAMRKFVDKMITLAKDGSLHKRRQALGYIYEKQIVHALFAEVPDRYGERNGGYTRIIRTLPRRGDNAPMAYIELV.

The transit peptide at 1–95 (MAIPMSMAMA…IVDGGGRIYA (95 aa)) directs the protein to the chloroplast.

This sequence belongs to the bacterial ribosomal protein bL17 family. As to quaternary structure, part of the 50S ribosomal subunit.

It localises to the plastid. The protein resides in the chloroplast. Its function is as follows. This protein binds directly to 23S ribosomal RNA. This Arabidopsis thaliana (Mouse-ear cress) protein is Large ribosomal subunit protein bL17c (RPL17).